The following is a 287-amino-acid chain: Damage-control phosphatase PH1575 (287 aa).

Positions 7 to 10 (CLTC) match the Subfamily I CxxC motif motif. Mn(2+) contacts are provided by Asp-156, Asn-157, and Asp-191. Residues 243–246 (GNFE) carry the Subfamily I GNFE motif motif. Residues 263 to 264 (KC) carry the Subfamily I KC motif motif.

The protein belongs to the damage-control phosphatase family. Nucleotides phosphatase I subfamily. Requires Mn(2+) as cofactor. It depends on Ni(2+) as a cofactor. [2Fe-2S] cluster is required as a cofactor.

With respect to regulation, activity is strongly promoted by Co(2+), Ni(2+), Mg(2+), Mn(2+), Ca(2+), Zn(2+) and Cu(2+). Activity is inhibited by EDTA. Metal-dependent phosphatase with probable damage-control functions. Shows phosphatase activity against p-nitrophenyl phosphate (pNPP), but natural substrates have not been identified yet. Low phosphatase activity against 8-oxo nucleotides suggests that it could hydrolyze oxidatively damaged purine nucleotides or their biosynthetic intermediates. The chain is Damage-control phosphatase PH1575 from Pyrococcus horikoshii (strain ATCC 700860 / DSM 12428 / JCM 9974 / NBRC 100139 / OT-3).